A 275-amino-acid chain; its full sequence is Shikimate dehydrogenase (NADP(+)) (275 aa).

Residues 15–17 and Thr-62 contribute to the shikimate site; that span reads SKS. The active-site Proton acceptor is Lys-66. Glu-78 serves as a coordination point for NADP(+). Shikimate-binding residues include Asn-87 and Asp-102. Residues 128-132, 151-156, and Leu-218 contribute to the NADP(+) site; these read GAGGA and NRTAEK. Tyr-220 is a binding site for shikimate. Position 241 (Gly-241) interacts with NADP(+).

The protein belongs to the shikimate dehydrogenase family. In terms of assembly, homodimer.

The catalysed reaction is shikimate + NADP(+) = 3-dehydroshikimate + NADPH + H(+). It functions in the pathway metabolic intermediate biosynthesis; chorismate biosynthesis; chorismate from D-erythrose 4-phosphate and phosphoenolpyruvate: step 4/7. Functionally, involved in the biosynthesis of the chorismate, which leads to the biosynthesis of aromatic amino acids. Catalyzes the reversible NADPH linked reduction of 3-dehydroshikimate (DHSA) to yield shikimate (SA). The polypeptide is Shikimate dehydrogenase (NADP(+)) (Shouchella clausii (strain KSM-K16) (Alkalihalobacillus clausii)).